Here is an 84-residue protein sequence, read N- to C-terminus: Large ribosomal subunit protein bL27 (84 aa).

Residues 1–22 (MAHKKAGGSTRNGRDSESKRLG) are disordered.

The protein belongs to the bacterial ribosomal protein bL27 family.

The sequence is that of Large ribosomal subunit protein bL27 from Shewanella baltica (strain OS223).